Reading from the N-terminus, the 105-residue chain is Large ribosomal subunit protein uL24 (105 aa).

It belongs to the universal ribosomal protein uL24 family. In terms of assembly, part of the 50S ribosomal subunit.

In terms of biological role, one of two assembly initiator proteins, it binds directly to the 5'-end of the 23S rRNA, where it nucleates assembly of the 50S subunit. One of the proteins that surrounds the polypeptide exit tunnel on the outside of the subunit. The chain is Large ribosomal subunit protein uL24 from Novosphingobium aromaticivorans (strain ATCC 700278 / DSM 12444 / CCUG 56034 / CIP 105152 / NBRC 16084 / F199).